The following is a 460-amino-acid chain: Probable amino acid transporter skat-1 (460 aa).

10 consecutive transmembrane segments (helical) span residues L64 to G84, F132 to I152, M172 to M192, I194 to M214, T236 to I256, F270 to F290, V316 to Y336, G362 to E382, I383 to F403, and I426 to T446.

The protein belongs to the amino acid/polyamine transporter 2 family. As to expression, expressed in the head, tail, body and ventral nerve cord neurons, muscles of the vulva, and intestine.

Its subcellular location is the membrane. It is found in the cytoplasmic granule. Plays a role in the accumulation of vital dyes and endogenous fluorescent compounds in lysosome related organelles. Has an effect on lysosome related organelle (LRO) function, in a pathway with serotonin. This is Probable amino acid transporter skat-1 from Caenorhabditis elegans.